The primary structure comprises 319 residues: Probable cytochrome c oxidase subunit 2 (319 aa).

The signal sequence occupies residues 1-33; that stretch reads MSPNGSDRSPRRPMRRKLLQALTAGLVLATATG. 2 helical membrane-spanning segments follow: residues 63 to 83 and 101 to 121; these read WAAA…SVFF and LPIE…LFYF. Positions 227, 262, 266, and 270 each coordinate Cu cation.

It belongs to the cytochrome c oxidase subunit 2 family. Cu cation serves as cofactor. The cofactor is heme.

It is found in the cell membrane. The enzyme catalyses 4 Fe(II)-[cytochrome c] + O2 + 8 H(+)(in) = 4 Fe(III)-[cytochrome c] + 2 H2O + 4 H(+)(out). Functionally, subunits I and II form the functional core of the enzyme complex. Electrons originating in cytochrome c are transferred via heme a and Cu(A) to the binuclear center formed by heme a3 and Cu(B). This is Probable cytochrome c oxidase subunit 2 (ctaC) from Streptomyces coelicolor (strain ATCC BAA-471 / A3(2) / M145).